The chain runs to 606 residues: UvrABC system protein C (606 aa).

The 80-residue stretch at 14 to 93 (QNPGVYLMKD…IKKHSPRYNV (80 aa)) folds into the GIY-YIG domain. In terms of domain architecture, UVR spans 203–238 (PDLINRLKFEMQTEADLEHFERAAQIRDTILAIQTT).

This sequence belongs to the UvrC family. Interacts with UvrB in an incision complex.

The protein resides in the cytoplasm. The UvrABC repair system catalyzes the recognition and processing of DNA lesions. UvrC both incises the 5' and 3' sides of the lesion. The N-terminal half is responsible for the 3' incision and the C-terminal half is responsible for the 5' incision. The sequence is that of UvrABC system protein C from Desulforapulum autotrophicum (strain ATCC 43914 / DSM 3382 / VKM B-1955 / HRM2) (Desulfobacterium autotrophicum).